Here is a 66-residue protein sequence, read N- to C-terminus: Large ribosomal subunit protein bL35c (66 aa).

The protein belongs to the bacterial ribosomal protein bL35 family.

Its subcellular location is the plastid. It localises to the chloroplast. The chain is Large ribosomal subunit protein bL35c from Guillardia theta (Cryptophyte).